A 159-amino-acid chain; its full sequence is Mating-type P-specific polypeptide Pi (159 aa).

A DNA-binding region (homeobox; TALE-type; partial) is located at residues 103–159; it reads MTTVRGQCSKCTKPHLMRWLLLHYDNPYPSNSEFYDLSAATGLTRTQLRNWFSNRRR.

It belongs to the TALE/M-ATYP homeobox family.

Its subcellular location is the nucleus. Its function is as follows. Mating type proteins are sequence specific DNA-binding proteins that act as master switches in yeast differentiation by controlling gene expression in a cell type-specific fashion. Required for meiosis, but plays no role in conjugation. The protein is Mating-type P-specific polypeptide Pi (matPi) of Schizosaccharomyces kambucha (Fission yeast).